Consider the following 148-residue polypeptide: Gag-Pol polyprotein (148 aa).

Positions 1-64 (IPYNPQSQGV…SAGERIIDII (64 aa)) constitute an Integrase catalytic domain. Mg(2+) is bound at residue glutamate 12. The integrase-type DNA-binding region spans 83–130 (FRVYYRDSRDPIWKGPAKLLWKGEGAVVIQDNSDIKVVPRRKVKIIRD).

Homotetramer; may further associate as a homohexadecamer. Part of the pre-integration complex (PIC) which is composed of viral genome, matrix protein, Vpr and integrase. Interacts with human SMARCB1/INI1 and human PSIP1/LEDGF isoform 1. Interacts with human KPNA3; this interaction might play a role in nuclear import of the pre-integration complex. Interacts with human NUP153; this interaction might play a role in nuclear import of the pre-integration complex. Post-translationally, specific enzymatic cleavages by the viral protease yield mature proteins.

Functionally, catalyzes viral DNA integration into the host chromosome, by performing a series of DNA cutting and joining reactions. This enzyme activity takes place after virion entry into a cell and reverse transcription of the RNA genome in dsDNA. The first step in the integration process is 3' processing. This step requires a complex comprising the viral genome, matrix protein, Vpr and integrase. This complex is called the pre-integration complex (PIC). The integrase protein removes 2 nucleotides from each 3' end of the viral DNA, leaving recessed CA OH's at the 3' ends. In the second step, the PIC enters cell nucleus. This process is mediated through integrase and Vpr proteins, and allows the virus to infect a non dividing cell. This ability to enter the nucleus is specific of lentiviruses, other retroviruses cannot and rely on cell division to access cell chromosomes. In the third step, termed strand transfer, the integrase protein joins the previously processed 3' ends to the 5' ends of strands of target cellular DNA at the site of integration. The 5'-ends are produced by integrase-catalyzed staggered cuts, 5 bp apart. A Y-shaped, gapped, recombination intermediate results, with the 5'-ends of the viral DNA strands and the 3' ends of target DNA strands remaining unjoined, flanking a gap of 5 bp. The last step is viral DNA integration into host chromosome. This involves host DNA repair synthesis in which the 5 bp gaps between the unjoined strands are filled in and then ligated. Since this process occurs at both cuts flanking the HIV genome, a 5 bp duplication of host DNA is produced at the ends of HIV-1 integration. Alternatively, Integrase may catalyze the excision of viral DNA just after strand transfer, this is termed disintegration. This Homo sapiens (Human) protein is Gag-Pol polyprotein (gag-pol).